The chain runs to 179 residues: Large ribosomal subunit protein uL6 (179 aa).

It belongs to the universal ribosomal protein uL6 family. As to quaternary structure, part of the 50S ribosomal subunit.

Its function is as follows. This protein binds to the 23S rRNA, and is important in its secondary structure. It is located near the subunit interface in the base of the L7/L12 stalk, and near the tRNA binding site of the peptidyltransferase center. This Pelobacter propionicus (strain DSM 2379 / NBRC 103807 / OttBd1) protein is Large ribosomal subunit protein uL6.